Consider the following 292-residue polypeptide: 4-hydroxy-tetrahydrodipicolinate synthase (292 aa).

Threonine 45 contributes to the pyruvate binding site. The active-site Proton donor/acceptor is tyrosine 133. Lysine 161 functions as the Schiff-base intermediate with substrate in the catalytic mechanism. Position 203 (isoleucine 203) interacts with pyruvate.

This sequence belongs to the DapA family. In terms of assembly, homotetramer; dimer of dimers.

The protein localises to the cytoplasm. It carries out the reaction L-aspartate 4-semialdehyde + pyruvate = (2S,4S)-4-hydroxy-2,3,4,5-tetrahydrodipicolinate + H2O + H(+). The protein operates within amino-acid biosynthesis; L-lysine biosynthesis via DAP pathway; (S)-tetrahydrodipicolinate from L-aspartate: step 3/4. Its function is as follows. Catalyzes the condensation of (S)-aspartate-beta-semialdehyde [(S)-ASA] and pyruvate to 4-hydroxy-tetrahydrodipicolinate (HTPA). This Dechloromonas aromatica (strain RCB) protein is 4-hydroxy-tetrahydrodipicolinate synthase.